We begin with the raw amino-acid sequence, 162 residues long: 2-C-methyl-D-erythritol 2,4-cyclodiphosphate synthase (162 aa).

Residues D8 and H10 each contribute to the a divalent metal cation site. Residues 8-10 (DVH) and 34-35 (HS) each bind 4-CDP-2-C-methyl-D-erythritol 2-phosphate. H42 is a binding site for a divalent metal cation. Residues 56–58 (DIG), 61–65 (FPDND), 132–135 (TTTE), F139, and K142 contribute to the 4-CDP-2-C-methyl-D-erythritol 2-phosphate site.

Belongs to the IspF family. In terms of assembly, homotrimer. The cofactor is a divalent metal cation.

It catalyses the reaction 4-CDP-2-C-methyl-D-erythritol 2-phosphate = 2-C-methyl-D-erythritol 2,4-cyclic diphosphate + CMP. It functions in the pathway isoprenoid biosynthesis; isopentenyl diphosphate biosynthesis via DXP pathway; isopentenyl diphosphate from 1-deoxy-D-xylulose 5-phosphate: step 4/6. In terms of biological role, involved in the biosynthesis of isopentenyl diphosphate (IPP) and dimethylallyl diphosphate (DMAPP), two major building blocks of isoprenoid compounds. Catalyzes the conversion of 4-diphosphocytidyl-2-C-methyl-D-erythritol 2-phosphate (CDP-ME2P) to 2-C-methyl-D-erythritol 2,4-cyclodiphosphate (ME-CPP) with a corresponding release of cytidine 5-monophosphate (CMP). This chain is 2-C-methyl-D-erythritol 2,4-cyclodiphosphate synthase, found in Pelotomaculum thermopropionicum (strain DSM 13744 / JCM 10971 / SI).